The chain runs to 115 residues: Chorion protein S15 (115 aa).

The first 18 residues, 1–18 (MKYLIVCVTLALFAYINA), serve as a signal peptide directing secretion.

Belongs to the chorion protein S15/S18 family.

It is found in the secreted. Functionally, chorion membrane (egg shell) protein; plays a role in protecting the egg from the environment. This chain is Chorion protein S15 (Cp15), found in Drosophila melanogaster (Fruit fly).